A 1466-amino-acid chain; its full sequence is ABC transporter G family member 10 (1466 aa).

The segment covering 23-45 has biased composition (low complexity); it reads NTPQYENNNNNNNNTSGNESPNI. The segment at 23–47 is disordered; that stretch reads NTPQYENNNNNNNNTSGNESPNILN. The ABC transporter 1 domain maps to 138 to 392; that stretch reads VTIFNLFRPS…FLDLGFDCEP (255 aa). An ABC transmembrane type-2 1 domain is found at 497–724; sequence WGDRFALISK…NGSTMSYQDQ (228 aa). Transmembrane regions (helical) follow at residues 501-521, 537-557, 586-606, 611-631, 641-661, and 767-787; these read FALI…ASLF, AIYA…GLTF, IPLT…MYGL, GKFF…VAFF, LYVS…YGGY, and IITF…LELF. Residues 838–1082 enclose the ABC transporter 2 domain; sequence FTWNHIHYTV…LTSYFERNGV (245 aa). An ATP-binding site is contributed by 874-881; that stretch reads GSSGAGKT. The 223-residue stretch at 1177-1399 folds into the ABC transmembrane type-2 2 domain; the sequence is SYVYGIFTQA…LTCKEYFKPT (223 aa). Helical transmembrane passes span 1178–1198, 1214–1234, 1253–1273, 1290–1310, 1319–1339, and 1440–1460; these read YVYG…FTFW, IFEI…QFLI, FAIS…TICF, FYFY…GQVV, LAQT…GVLV, and YGIL…FVYL.

This sequence belongs to the ABC transporter superfamily. ABCG family. PDR (TC 3.A.1.205) subfamily.

The protein resides in the membrane. The chain is ABC transporter G family member 10 (abcG10) from Dictyostelium discoideum (Social amoeba).